The sequence spans 293 residues: Ribosomal protein L11 methyltransferase (293 aa).

Residues threonine 145, glycine 166, aspartate 188, and asparagine 230 each coordinate S-adenosyl-L-methionine.

Belongs to the methyltransferase superfamily. PrmA family.

The protein localises to the cytoplasm. It carries out the reaction L-lysyl-[protein] + 3 S-adenosyl-L-methionine = N(6),N(6),N(6)-trimethyl-L-lysyl-[protein] + 3 S-adenosyl-L-homocysteine + 3 H(+). Functionally, methylates ribosomal protein L11. The sequence is that of Ribosomal protein L11 methyltransferase from Yersinia pseudotuberculosis serotype I (strain IP32953).